Consider the following 455-residue polypeptide: L-serine dehydratase 2 (455 aa).

Belongs to the iron-sulfur dependent L-serine dehydratase family. It depends on [4Fe-4S] cluster as a cofactor. Post-translationally, activated by post-translational modification by a system involving at least three gene products. Activation is mimicked in vitro by iron and dithiothreitol. There is considerable evidence for a free-radical activation mechanism.

It catalyses the reaction L-serine = pyruvate + NH4(+). Its pathway is carbohydrate biosynthesis; gluconeogenesis. Functionally, also deaminates threonine, particularly when it is present in high concentration. In Escherichia coli (strain K12), this protein is L-serine dehydratase 2 (sdaB).